The chain runs to 381 residues: Succinyl-diaminopimelate desuccinylase (381 aa).

H69 contacts Zn(2+). D71 is an active-site residue. D103 contacts Zn(2+). The active-site Proton acceptor is the E137. Residues E138, E166, and H355 each contribute to the Zn(2+) site.

This sequence belongs to the peptidase M20A family. DapE subfamily. As to quaternary structure, homodimer. Zn(2+) is required as a cofactor. Co(2+) serves as cofactor.

It carries out the reaction N-succinyl-(2S,6S)-2,6-diaminopimelate + H2O = (2S,6S)-2,6-diaminopimelate + succinate. It participates in amino-acid biosynthesis; L-lysine biosynthesis via DAP pathway; LL-2,6-diaminopimelate from (S)-tetrahydrodipicolinate (succinylase route): step 3/3. Functionally, catalyzes the hydrolysis of N-succinyl-L,L-diaminopimelic acid (SDAP), forming succinate and LL-2,6-diaminopimelate (DAP), an intermediate involved in the bacterial biosynthesis of lysine and meso-diaminopimelic acid, an essential component of bacterial cell walls. The sequence is that of Succinyl-diaminopimelate desuccinylase from Rickettsia felis (strain ATCC VR-1525 / URRWXCal2) (Rickettsia azadi).